Reading from the N-terminus, the 504-residue chain is AMP phosphorylase (504 aa).

AMP is bound by residues glycine 169, 195 to 200, and threonine 204; that span reads SRAITS. Catalysis depends on aspartate 257, which acts as the Proton donor. AMP contacts are provided by serine 265 and lysine 289.

It belongs to the thymidine/pyrimidine-nucleoside phosphorylase family. Type 2 subfamily.

It carries out the reaction AMP + phosphate = alpha-D-ribose 1,5-bisphosphate + adenine. It catalyses the reaction CMP + phosphate = cytosine + alpha-D-ribose 1,5-bisphosphate. The enzyme catalyses UMP + phosphate = alpha-D-ribose 1,5-bisphosphate + uracil. Catalyzes the conversion of AMP and phosphate to adenine and ribose 1,5-bisphosphate (R15P). Exhibits phosphorylase activity toward CMP and UMP in addition to AMP. Functions in an archaeal AMP degradation pathway, together with R15P isomerase and RubisCO. The sequence is that of AMP phosphorylase from Methanococcus aeolicus (strain ATCC BAA-1280 / DSM 17508 / OCM 812 / Nankai-3).